Consider the following 449-residue polypeptide: Chromosomal replication initiator protein DnaA (449 aa).

A domain I, interacts with DnaA modulators region spans residues 1–75; it reads MDTNNDIEKR…EILSQNKVGM (75 aa). The interval 75 to 106 is domain II; it reads MHLAHSVDVRIEVASKVHVSDHSNINYKATKS. The domain III, AAA+ region stretch occupies residues 107 to 321; the sequence is SIKDSYTFEN…GAIIKISVNA (215 aa). Residues Gly-151, Gly-153, Lys-154, and Thr-155 each contribute to the ATP site. Residues 322–449 are domain IV, binds dsDNA; sequence NLMNAPIDLN…LNELNDKKQH (128 aa).

This sequence belongs to the DnaA family. In terms of assembly, oligomerizes as a right-handed, spiral filament on DNA at oriC.

It localises to the cytoplasm. Functionally, plays an essential role in the initiation and regulation of chromosomal replication. ATP-DnaA binds to the origin of replication (oriC) to initiate formation of the DNA replication initiation complex once per cell cycle. Binds the DnaA box (a 9 base pair repeat at the origin) and separates the double-stranded (ds)DNA. Forms a right-handed helical filament on oriC DNA; dsDNA binds to the exterior of the filament while single-stranded (ss)DNA is stabiized in the filament's interior. The ATP-DnaA-oriC complex binds and stabilizes one strand of the AT-rich DNA unwinding element (DUE), permitting loading of DNA polymerase. After initiation quickly degrades to an ADP-DnaA complex that is not apt for DNA replication. Binds acidic phospholipids. This is Chromosomal replication initiator protein DnaA from Helicobacter acinonychis (strain Sheeba).